Reading from the N-terminus, the 404-residue chain is Intracellular hyaluronan-binding protein 4.L (404 aa).

Disordered regions lie at residues 1–21, 51–288, and 359–379; these read MRLD…MQDN, LTRR…QEMS, and LTRP…REEA. Residues 8 to 19 are compositionally biased toward polar residues; that stretch reads ETPSSPVNTEMQ. 3 stretches are compositionally biased toward basic and acidic residues: residues 71–81, 145–159, and 165–184; these read GKKESQKDRKA, KVDR…REVR, and RSNE…DKQM. Positions 188–200 are enriched in gly residues; sequence GGRGGMRGRGRGG. Composition is skewed to basic and acidic residues over residues 205 to 233 and 270 to 281; these read TEND…DKRG and EEHAKVPEEKNE.

It belongs to the SERBP1-HABP4 family. In terms of assembly, associates with ribosomes; promoting ribosome stabilization. Interacts with eef2/eEF2; promoting ribosome stabilization.

It localises to the nucleus. Its subcellular location is the cytoplasm. It is found in the stress granule. The protein resides in the nucleolus. The protein localises to the nucleus speckle. It localises to the cajal body. Functionally, ribosome-binding protein that promotes ribosome hibernation, a process during which ribosomes are stabilized in an inactive state and preserved from proteasomal degradation. Acts via its association with eef2/eEF2 factor at the A-site of the ribosome, promoting ribosome stabilization in an inactive state compatible with storage. Plays a key role in ribosome hibernation in the mature egg by promoting ribosome stabilization. Ribosomes, which are produced in large quantities during oogenesis, are stored and translationally repressed in the egg and early embryo. This chain is Intracellular hyaluronan-binding protein 4.L, found in Xenopus laevis (African clawed frog).